Consider the following 277-residue polypeptide: Release factor glutamine methyltransferase (277 aa).

Residues 120 to 124 (GTGSG), Asp-143, Trp-171, and Asn-186 each bind S-adenosyl-L-methionine. Substrate is bound at residue 186–189 (NPPY).

This sequence belongs to the protein N5-glutamine methyltransferase family. PrmC subfamily.

The enzyme catalyses L-glutaminyl-[peptide chain release factor] + S-adenosyl-L-methionine = N(5)-methyl-L-glutaminyl-[peptide chain release factor] + S-adenosyl-L-homocysteine + H(+). Methylates the class 1 translation termination release factors RF1/PrfA and RF2/PrfB on the glutamine residue of the universally conserved GGQ motif. In Coxiella burnetii (strain RSA 493 / Nine Mile phase I), this protein is Release factor glutamine methyltransferase.